The sequence spans 405 residues: Obg-like ATPase homolog (405 aa).

The OBG-type G domain maps to 17-283; sequence PTSGIVGLAN…CKGIASEYFD (267 aa). Residues 26–31 and V231 each bind ATP; that span reads NVGKST. The TGS domain maps to 312 to 398; that stretch reads NLISFFTCGP…QDNDIALFKA (87 aa).

Belongs to the TRAFAC class OBG-HflX-like GTPase superfamily. OBG GTPase family.

It is found in the mitochondrion. Hydrolyzes ATP, and can also hydrolyze GTP with lower efficiency. Has lower affinity for GTP. This chain is Obg-like ATPase homolog (YLF2), found in Saccharomyces cerevisiae (strain ATCC 204508 / S288c) (Baker's yeast).